The following is a 115-amino-acid chain: Mediator of RNA polymerase II transcription subunit 22 (115 aa).

It belongs to the Mediator complex subunit 22 family. Component of the Mediator complex.

It is found in the nucleus. Component of the Mediator complex, a coactivator involved in the regulated transcription of nearly all RNA polymerase II-dependent genes. Mediator functions as a bridge to convey information from gene-specific regulatory proteins to the basal RNA polymerase II transcription machinery. Mediator is recruited to promoters by direct interactions with regulatory proteins and serves as a scaffold for the assembly of a functional preinitiation complex with RNA polymerase II and the general transcription factors. The sequence is that of Mediator of RNA polymerase II transcription subunit 22 (SRB6) from Candida albicans (strain SC5314 / ATCC MYA-2876) (Yeast).